A 238-amino-acid chain; its full sequence is Ubiquitin-conjugating enzyme E2 R2 (238 aa).

A UBC core domain is found at 8–174 (SSQKALMLEL…IRKQVSATKA (167 aa)). The Glycyl thioester intermediate role is filled by cysteine 93. The tract at residues 98 to 113 (HPPVDDPQSGELPSER) is important for ubiquitin transfer. Positions 194-238 (TKVPSNDNSSDLLYDDLYDDDIDDEDEEEEDADCYDDDDSGNEES) are disordered. Positions 206 to 238 (LYDDLYDDDIDDEDEEEEDADCYDDDDSGNEES) are enriched in acidic residues. Position 233 is a phosphoserine; by CK2 (serine 233).

It belongs to the ubiquitin-conjugating enzyme family. Interacts with multiple Cul1-RING E3 ubiquitin-protein ligase complexes, also known as SCF (SKP1-CUL1-F-box protein) complexes, including SCF(FBXW7) and SCF(BTRC). Interacts with multiple Cul2-RING (CRL2) E3 ubiquitin-protein ligase complexes, also known as ECS (Elongin BC-CUL2/5-SOCS-box protein) complexes, including CRL2(FEM1C) and ECS(VHL). When phosphorylated, interacts with beta-TrCP (BTRC).

The catalysed reaction is S-ubiquitinyl-[E1 ubiquitin-activating enzyme]-L-cysteine + [E2 ubiquitin-conjugating enzyme]-L-cysteine = [E1 ubiquitin-activating enzyme]-L-cysteine + S-ubiquitinyl-[E2 ubiquitin-conjugating enzyme]-L-cysteine.. It functions in the pathway protein modification; protein ubiquitination. With respect to regulation, neddylation of CUL2 in the CRL2(FEM1C) E3 ligase complex increases substrate affinity of UBE2R2 and the ubiquitin-transfer rate in the E2-E3 complex. E2 ubiquitin-conjugating enzyme that accepts ubiquitin from an E1 ubiquitin-activating protein, and catalyzes its covalent attachment to other proteins by an E3 ubiquitin-protein ligase complex. In vitro catalyzes monoubiquitination and 'Lys-48'-linked polyubiquitination. Works in collaboration with various Cul1-RING and Cul2-RING E3 ligase complexes. May be involved in degradation of katenin. In Homo sapiens (Human), this protein is Ubiquitin-conjugating enzyme E2 R2 (UBE2R2).